A 92-amino-acid polypeptide reads, in one-letter code: Elongation factor 1-beta (92 aa).

It belongs to the EF-1-beta/EF-1-delta family.

In terms of biological role, promotes the exchange of GDP for GTP in EF-1-alpha/GDP, thus allowing the regeneration of EF-1-alpha/GTP that could then be used to form the ternary complex EF-1-alpha/GTP/AAtRNA. The protein is Elongation factor 1-beta of Pyrobaculum neutrophilum (strain DSM 2338 / JCM 9278 / NBRC 100436 / V24Sta) (Thermoproteus neutrophilus).